Consider the following 347-residue polypeptide: Gas vesicle ATPase GvpN (347 aa).

A disordered region spans residues 1-50 (MTNSSRERKVRGSQIRTSRREKQDKNARNRTEKELTRLENHQTHRTKNGT). Residues 18 to 42 (SRREKQDKNARNRTEKELTRLENHQ) are compositionally biased toward basic and acidic residues. 91–98 (GPTGCGKT) is an ATP binding site.

The protein belongs to the CbbQ/NirQ/NorQ/GpvN family. In terms of assembly, forms homodimers, a GvpN-GvpO heterodimer, interacts with GvpC and GvpL, might interact with GvpA.

It is found in the gas vesicle. It localises to the cytoplasm. It catalyses the reaction ATP + H2O = ADP + phosphate + H(+). Its function is as follows. An ATPase that functions in gas vesicle formation. A minor component of the gas vesicle, also found in soluble extracts. Gas vesicles are hollow, gas filled proteinaceous nanostructures found in some microorganisms. They allow positioning of halobacteria at the optimal depth for growth in the poorly aerated, shallow brine pools of their habitat. Expression of a 9.5 kb mc-vac DNA fragment containing 2 divergently transcribed regions (gvpD-gvpE-gvpF-gvpG-gvpH-gvpI-gvpJ-gvpK-gvpL-gvpM and gvpA-gvpC-gvpN-gvpO) allows H.volcanii to produce gas vesicles. The chain is Gas vesicle ATPase GvpN from Haloferax mediterranei (strain ATCC 33500 / DSM 1411 / JCM 8866 / NBRC 14739 / NCIMB 2177 / R-4) (Halobacterium mediterranei).